A 553-amino-acid polypeptide reads, in one-letter code: Meiotic expression up-regulated protein 18 (553 aa).

A disordered region spans residues 267–305 (SNETLCSNDSKHRIARLKNEDNTQKPISKKRKSKKASHK). Residues 275–289 (DSKHRIARLKNEDNT) show a composition bias toward basic and acidic residues. The span at 293-304 (ISKKRKSKKASH) shows a compositional bias: basic residues.

This is Meiotic expression up-regulated protein 18 (meu18) from Schizosaccharomyces pombe (strain 972 / ATCC 24843) (Fission yeast).